A 377-amino-acid polypeptide reads, in one-letter code: uncharacterized protein (377 aa).

10 helical membrane-spanning segments follow: residues 4-24 (LLTP…LLGT), 41-61 (ASFG…FPIT), 85-105 (IAAL…FLFG), 134-154 (FHAM…IATV), 159-179 (VYVH…PFLL), 192-212 (GAVG…IALA), 278-298 (VFGI…AGFV), 301-321 (GVGY…DLVV), 327-347 (IASV…AIGL), and 356-376 (LCFF…PVLK).

It to R.meliloti MosC.

It localises to the cell membrane. Could be involved in a transport system. This is an uncharacterized protein from Sinorhizobium fredii (strain NBRC 101917 / NGR234).